Consider the following 185-residue polypeptide: dTTP/UTP pyrophosphatase (185 aa).

The Proton acceptor role is filled by Asp64.

It belongs to the Maf family. YhdE subfamily. A divalent metal cation is required as a cofactor.

The protein localises to the cytoplasm. The enzyme catalyses dTTP + H2O = dTMP + diphosphate + H(+). It carries out the reaction UTP + H2O = UMP + diphosphate + H(+). Its function is as follows. Nucleoside triphosphate pyrophosphatase that hydrolyzes dTTP and UTP. May have a dual role in cell division arrest and in preventing the incorporation of modified nucleotides into cellular nucleic acids. The sequence is that of dTTP/UTP pyrophosphatase from Leptospira borgpetersenii serovar Hardjo-bovis (strain JB197).